The following is a 418-amino-acid chain: MFSPDQENHPSKAPVKYGELIVLGYNGSLPNGDRGRRKSRFALFKRPKANGVKPSTVHIACTPQAAKAISNKDQHSISYTLSRAQTVVVEYTHDSNTDMFQIGRSTESPIDFVVTDTVPGSQSNSDTQSVQSTISRFACRIICERNPPFTARIYAAGFDSSKNIFLGEKAAKWKTSDGQMDGLTTNGVLVMHPRNGFTEDSKPGIWREISVCGNVFSLRETRSAQQRGKMVEIETNQLQDGSLIDLCGATLLWRTAEGLSHTPTVKHLEALRQEINAARPQCPVGFNTLAFPSMKRKDVVDEKQPWVYLNCGHVHGYHNWGNKEERDGKDRECPMCRSVGPYVPLWLGCEAGFYVDAGPPTHAFSPCGHVCSEKTTAYWSQIPLPHGTHTFHAACPFCAHQLAGEQGYIRLIFQGPLD.

Positions 13 to 200 constitute an FHA; atypical domain; sequence APVKYGELIV…MHPRNGFTED (188 aa). Residue S121 is modified to Phosphoserine; by ATM. T127 bears the Phosphothreonine; by ATM mark. The interval 311 to 399 is ring-like domain; necessary for ubiqitination of RIPK3; that stretch reads CGHVHGYHNW…TFHAACPFCA (89 aa).

The protein belongs to the pellino family. Interacts with MAP3K7. Upon IL1B treatment, forms a complex with TRAF6, IRAK1, IRAK4 and MYD88; this complex recruits MAP3K7/TAK1, TAB1 and TAB2 to mediate NF-kappa-B activation. Direct binding of SMAD6 to PELI1 prevents the complex formation and hence negatively regulates IL1R-TLR signaling and eventually NF-kappa-B-mediated gene expression. Interacts (via atypical FHA domain) with RIPK3; preferentially binds to the 'Thr-182' phosphorylated form of RIPK3. Interacts with RIPK1 and IRAK1. Post-translationally, phosphorylation by IRAK1 and IRAK4 enhances its E3 ligase activity. Phosphorylated by ATM in response to DNA damage, promoting localization to DNA double-strand breaks (DSBs) and ability to mediate 'Lys-63'-linked ubiquitination of NBN. Sumoylated. Expressed at high levels in normal skin but decreased in keratinocytes from toxic epidermal necrolysis (TEN) patients (at protein level).

The protein localises to the chromosome. It catalyses the reaction S-ubiquitinyl-[E2 ubiquitin-conjugating enzyme]-L-cysteine + [acceptor protein]-L-lysine = [E2 ubiquitin-conjugating enzyme]-L-cysteine + N(6)-ubiquitinyl-[acceptor protein]-L-lysine.. It functions in the pathway protein modification; protein ubiquitination. E3 ubiquitin ligase catalyzing the covalent attachment of ubiquitin moieties onto substrate proteins. Involved in the TLR and IL-1 signaling pathways via interaction with the complex containing IRAK kinases and TRAF6. Acts as a positive regulator of inflammatory response in microglia through activation of NF-kappa-B and MAP kinase. Mediates 'Lys-63'-linked polyubiquitination of IRAK1 allowing subsequent NF-kappa-B activation. Conjugates 'Lys-63'-linked ubiquitin chains to the adapter protein ASC/PYCARD, which in turn is crucial for NLRP3 inflammasome activation. Mediates 'Lys-48'-linked polyubiquitination of RIPK3 leading to its subsequent proteasome-dependent degradation; preferentially recognizes and mediates the degradation of the 'Thr-182' phosphorylated form of RIPK3. Negatively regulates necroptosis by reducing RIPK3 expression. Mediates 'Lys-63'-linked ubiquitination of RIPK1. Following phosphorylation by ATM, catalyzes 'Lys-63'-linked ubiquitination of NBN, promoting DNA repair via homologous recombination. Negatively regulates activation of the metabolic mTORC1 signaling pathway by mediating 'Lys-63'-linked ubiquitination of mTORC1-inhibitory protein TSC1 and thereby promoting TSC1/TSC2 complex stability. The sequence is that of E3 ubiquitin-protein ligase pellino homolog 1 from Homo sapiens (Human).